We begin with the raw amino-acid sequence, 341 residues long: Ferrochelatase (341 aa).

Fe cation is bound by residues histidine 189 and glutamate 293.

It belongs to the ferrochelatase family.

It localises to the cytoplasm. The catalysed reaction is heme b + 2 H(+) = protoporphyrin IX + Fe(2+). The protein operates within porphyrin-containing compound metabolism; protoheme biosynthesis; protoheme from protoporphyrin-IX: step 1/1. Its function is as follows. Catalyzes the ferrous insertion into protoporphyrin IX. This Pseudomonas fluorescens (strain Pf0-1) protein is Ferrochelatase.